Reading from the N-terminus, the 154-residue chain is SsrA-binding protein (154 aa).

It belongs to the SmpB family.

It is found in the cytoplasm. Its function is as follows. Required for rescue of stalled ribosomes mediated by trans-translation. Binds to transfer-messenger RNA (tmRNA), required for stable association of tmRNA with ribosomes. tmRNA and SmpB together mimic tRNA shape, replacing the anticodon stem-loop with SmpB. tmRNA is encoded by the ssrA gene; the 2 termini fold to resemble tRNA(Ala) and it encodes a 'tag peptide', a short internal open reading frame. During trans-translation Ala-aminoacylated tmRNA acts like a tRNA, entering the A-site of stalled ribosomes, displacing the stalled mRNA. The ribosome then switches to translate the ORF on the tmRNA; the nascent peptide is terminated with the 'tag peptide' encoded by the tmRNA and targeted for degradation. The ribosome is freed to recommence translation, which seems to be the essential function of trans-translation. In Enterococcus faecalis (strain ATCC 700802 / V583), this protein is SsrA-binding protein.